We begin with the raw amino-acid sequence, 429 residues long: 4-hydroxy-3-methylbut-2-en-1-yl diphosphate synthase (flavodoxin) (429 aa).

Cysteine 323, cysteine 326, cysteine 369, and glutamate 376 together coordinate [4Fe-4S] cluster.

This sequence belongs to the IspG family. It depends on [4Fe-4S] cluster as a cofactor.

It catalyses the reaction (2E)-4-hydroxy-3-methylbut-2-enyl diphosphate + oxidized [flavodoxin] + H2O + 2 H(+) = 2-C-methyl-D-erythritol 2,4-cyclic diphosphate + reduced [flavodoxin]. The protein operates within isoprenoid biosynthesis; isopentenyl diphosphate biosynthesis via DXP pathway; isopentenyl diphosphate from 1-deoxy-D-xylulose 5-phosphate: step 5/6. Its function is as follows. Converts 2C-methyl-D-erythritol 2,4-cyclodiphosphate (ME-2,4cPP) into 1-hydroxy-2-methyl-2-(E)-butenyl 4-diphosphate. The sequence is that of 4-hydroxy-3-methylbut-2-en-1-yl diphosphate synthase (flavodoxin) from Wolbachia sp. subsp. Brugia malayi (strain TRS).